Here is a 522-residue protein sequence, read N- to C-terminus: Protein nucleotidyltransferase YdiU (522 aa).

The ATP site is built by glycine 109, glycine 111, arginine 112, lysine 132, aspartate 144, glycine 145, arginine 195, and arginine 202. Aspartate 271 acts as the Proton acceptor in catalysis. Mg(2+)-binding residues include asparagine 272 and aspartate 281. Residue aspartate 281 participates in ATP binding.

This sequence belongs to the SELO family. It depends on Mg(2+) as a cofactor. Mn(2+) serves as cofactor.

It carries out the reaction L-seryl-[protein] + ATP = 3-O-(5'-adenylyl)-L-seryl-[protein] + diphosphate. The enzyme catalyses L-threonyl-[protein] + ATP = 3-O-(5'-adenylyl)-L-threonyl-[protein] + diphosphate. The catalysed reaction is L-tyrosyl-[protein] + ATP = O-(5'-adenylyl)-L-tyrosyl-[protein] + diphosphate. It catalyses the reaction L-histidyl-[protein] + UTP = N(tele)-(5'-uridylyl)-L-histidyl-[protein] + diphosphate. It carries out the reaction L-seryl-[protein] + UTP = O-(5'-uridylyl)-L-seryl-[protein] + diphosphate. The enzyme catalyses L-tyrosyl-[protein] + UTP = O-(5'-uridylyl)-L-tyrosyl-[protein] + diphosphate. Its function is as follows. Nucleotidyltransferase involved in the post-translational modification of proteins. It can catalyze the addition of adenosine monophosphate (AMP) or uridine monophosphate (UMP) to a protein, resulting in modifications known as AMPylation and UMPylation. The protein is Protein nucleotidyltransferase YdiU of Burkholderia vietnamiensis (strain G4 / LMG 22486) (Burkholderia cepacia (strain R1808)).